The chain runs to 451 residues: NADH-quinone oxidoreductase subunit D (451 aa).

Belongs to the complex I 49 kDa subunit family. In terms of assembly, NDH-1 is composed of 14 different subunits. Subunits NuoB, C, D, E, F, and G constitute the peripheral sector of the complex.

The protein localises to the cell inner membrane. The enzyme catalyses a quinone + NADH + 5 H(+)(in) = a quinol + NAD(+) + 4 H(+)(out). Its function is as follows. NDH-1 shuttles electrons from NADH, via FMN and iron-sulfur (Fe-S) centers, to quinones in the respiratory chain. The immediate electron acceptor for the enzyme in this species is believed to be a menaquinone. Couples the redox reaction to proton translocation (for every two electrons transferred, four hydrogen ions are translocated across the cytoplasmic membrane), and thus conserves the redox energy in a proton gradient. The chain is NADH-quinone oxidoreductase subunit D from Salinibacter ruber (strain DSM 13855 / M31).